Consider the following 237-residue polypeptide: Redox-sensing transcriptional repressor Rex (237 aa).

A DNA-binding region (H-T-H motif) is located at residues 45–84; it reads LYYRELHRLLAAGESSTNSRDLGAMVNVSPAVVRRDLSSI. 119–124 lines the NAD(+) pocket; it reads GVGSLG.

It belongs to the transcriptional regulatory Rex family. In terms of assembly, homodimer.

Its subcellular location is the cytoplasm. In terms of biological role, modulates transcription in response to changes in cellular NADH/NAD(+) redox state. This chain is Redox-sensing transcriptional repressor Rex, found in Rhodopirellula baltica (strain DSM 10527 / NCIMB 13988 / SH1).